The primary structure comprises 997 residues: Mannuronan C5-epimerase AlgE2 (997 aa).

7 PbH1 repeats span residues 133-155 (DRDV…DPHE), 157-179 (TINL…VADF), 180-202 (QIGG…NIVT), 204-226 (TNDF…VVQR), 257-279 (AHDV…RVYG), 280-315 (AEDV…GVSG), and 320-359 (TTGT…SVSN). Hemolysin-type calcium-binding repeat units follow at residues 388-403 (GTAG…AHET), 406-422 (GLDG…NDIL), 424-439 (GGAG…GADL), 557-573 (GHAG…DDIL), 574-591 (VGGA…ADVF), 696-711 (GSAG…ADEV), 713-730 (HGGG…ADVF), 828-839 (GGDGNDTLSGSS), 846-862 (GGVG…NDIL), and 864-880 (GGAG…SDIF).

Belongs to the D-mannuronate C5-epimerase family. Ca(2+) serves as cofactor.

The protein resides in the secreted. The enzyme catalyses [(1-&gt;4)-beta-D-mannuronosyl](n) = [alginate](n). Its pathway is glycan biosynthesis; alginate biosynthesis. Inhibited by zinc. In terms of biological role, converts beta-D-mannuronic acid (M) to alpha-L-guluronic acid (G), producing a polymer with gel-forming capacity, required for the formation of the cyst coat. The protein is Mannuronan C5-epimerase AlgE2 of Azotobacter vinelandii.